We begin with the raw amino-acid sequence, 63 residues long: Cypmaclein (63 aa).

Belongs to the GASA family. As to expression, expressed in pollen (at protein level).

The protein is Cypmaclein of Cupressus sempervirens (Italian cypress).